The primary structure comprises 223 residues: Golgi SNAP receptor complex member 1-1 (223 aa).

Over 1–201 the chain is Cytoplasmic; sequence MDVPSSWDAL…AAIKRKKSMD (201 aa). A coiled-coil region spans residues 8-67; that stretch reads DALRKQARKIEAQLDEQMHSYRRLVSTKALSKSDGNESDLEAGIDLLLRQLQQVNAQMQA. The helical; Anchor for type IV membrane protein transmembrane segment at 202 to 222 threads the bilayer; sequence TIILSLVAAVCTFLIFIYWIT. Lys-223 is a topological domain (vesicular).

Belongs to the GOSR1 family. Component of several multiprotein Golgi SNARE complexes.

The protein resides in the golgi apparatus membrane. Functionally, involved in transport from the ER to the Golgi apparatus as well as in intra-Golgi transport. It belongs to a super-family of proteins called t-SNAREs or soluble NSF (N-ethylmaleimide-sensitive factor) attachment protein receptor. The protein is Golgi SNAP receptor complex member 1-1 (GOS11) of Arabidopsis thaliana (Mouse-ear cress).